A 195-amino-acid chain; its full sequence is Probable nicotinate-nucleotide adenylyltransferase (195 aa).

The protein belongs to the NadD family.

It carries out the reaction nicotinate beta-D-ribonucleotide + ATP + H(+) = deamido-NAD(+) + diphosphate. It participates in cofactor biosynthesis; NAD(+) biosynthesis; deamido-NAD(+) from nicotinate D-ribonucleotide: step 1/1. Its function is as follows. Catalyzes the reversible adenylation of nicotinate mononucleotide (NaMN) to nicotinic acid adenine dinucleotide (NaAD). The chain is Probable nicotinate-nucleotide adenylyltransferase from Opitutus terrae (strain DSM 11246 / JCM 15787 / PB90-1).